We begin with the raw amino-acid sequence, 584 residues long: Sperm-associated microtubule inner protein 4 (584 aa).

It localises to the cytoplasm. The protein localises to the cytoskeleton. Its subcellular location is the microtubule organizing center. It is found in the centrosome. The protein resides in the flagellum axoneme. Microtubule inner protein (MIP) part of the dynein-decorated doublet microtubules (DMTs) in flagellum axoneme. May serve to reinforce and thus stabilize the microtubule structure in the sperm flagella. The sequence is that of Sperm-associated microtubule inner protein 4 (SPMIP4) from Bos taurus (Bovine).